Consider the following 360-residue polypeptide: Peptide chain release factor 1 (360 aa).

Gln-233 carries the N5-methylglutamine modification. The interval 286–305 is disordered; sequence NEIAQERKSQVGTGDRSERI.

The protein belongs to the prokaryotic/mitochondrial release factor family. In terms of processing, methylated by PrmC. Methylation increases the termination efficiency of RF1.

It localises to the cytoplasm. Its function is as follows. Peptide chain release factor 1 directs the termination of translation in response to the peptide chain termination codons UAG and UAA. The sequence is that of Peptide chain release factor 1 from Acetivibrio thermocellus (strain ATCC 27405 / DSM 1237 / JCM 9322 / NBRC 103400 / NCIMB 10682 / NRRL B-4536 / VPI 7372) (Clostridium thermocellum).